We begin with the raw amino-acid sequence, 481 residues long: Tryptophan 5-hydroxylase (481 aa).

An ACT domain is found at 56-131 (SVIFSLKNEI…NVISMSPPEN (76 aa)). The L-tryptophan site is built by Tyr-272, Arg-294, and Thr-302. Positions 309, 314, and 354 each coordinate Fe cation. L-tryptophan is bound by residues Ser-373 and Ile-403.

It belongs to the biopterin-dependent aromatic amino acid hydroxylase family. As to quaternary structure, homotetramer. Fe(2+) is required as a cofactor.

The catalysed reaction is (6R)-L-erythro-5,6,7,8-tetrahydrobiopterin + L-tryptophan + O2 = 5-hydroxy-L-tryptophan + (4aS,6R)-4a-hydroxy-L-erythro-5,6,7,8-tetrahydrobiopterin. The protein operates within aromatic compound metabolism; serotonin biosynthesis; serotonin from L-tryptophan: step 1/2. Functionally, oxidizes L-tryptophan to 5-hydroxy-l-tryptophan in the rate-determining step of serotonin biosynthesis. This is Tryptophan 5-hydroxylase (tph1) from Xenopus laevis (African clawed frog).